A 578-amino-acid chain; its full sequence is MYGIDIELSDYRIGSETISSGDDGYYEGCACDKDASTNAYSYDKCRVVRGTWRPSELVLYVGDEHVACRDVASGMHHGNLPGKVYFIEAEAGRAATAEGGVYTTVVEALSLVQEEEGTGMYLINAPEKAVVRFFKIEKSAAEEPQTVDPSVVESATGSGVDTQEEQEIDQEAPAIEEVETEEQEVILEEGTLIDLEQPVAQVPVVAEAELPGVEAAEAIVPSLEENKLQEVVVAPEAQQLESAPEVSAPAQPESTVLGVAEGDLKSEVSVEANADVAQKEVISGQQEQEIAEALEGTEAPVEVKEETEVLLKEDTLIDLEQPVAQVPVVAEAELPGVEAAEAIVPSLEENKLQEVVVAPEAQQLESAPEVSAPAQPESTVLGVTEGDLKSEVSVEADAGMQQEAGISDQETQATEEVEKVEVSVETKTEEPEVILEEGTLIDLEQPVAQVPVVAEAELPGVEAAEAIVPSLEENKLQEVVVAPEAQQLESAPEVSAPVQPESTVLGVTEGDLKSEVSVEADAGMQQEAGISDQETQATEEVEKVEVSVEADAGMQQELVDVPTALPLKDPDDEDVLSY.

Residues 144-169 (PQTVDPSVVESATGSGVDTQEEQEID) form a disordered region. 3 tandem repeats follow at residues 180 to 272 (TEEQ…SVEA), 304 to 425 (KEET…VSVE), and 428 to 557 (TEEP…MQQE). Residues 180 to 557 (TEEQEVILEE…VEADAGMQQE (378 aa)) form a 3 X approximate tandem repeats region. The disordered stretch occupies residues 516–578 (VSVEADAGMQ…DPDDEDVLSY (63 aa)).

Post-translationally, polysumoylated during infection on at least two lysine residues, in the N- and C-terminal section. SUMO2/3 modification of AmpA throughout the infection cycle is likely critical for bacterial intracellular survival, while terminal SUMO1 conjugation of AmpA may promote a late-stage infection cycle event. Only a small portion of the available AmpA pool is actually SUMOylated at any given time.

Its subcellular location is the secreted. The protein resides in the host membrane. It is found in the host cytoplasm. The protein localises to the host cytosol. Its function is as follows. Secreted effector that hijacks host cell SUMOylation during A.phagocytophilum infection and is important for the pathogen's intracellular survival. The polypeptide is SUMOylated effector protein AmpA (Anaplasma phagocytophilum (strain HZ)).